The chain runs to 240 residues: EF-hand domain-containing protein D2 (240 aa).

Ala-2 is subject to N-acetylalanine. A Phosphoserine modification is found at Ser-11. The interval Arg-13–Ala-38 is disordered. 2 positions are modified to phosphoserine: Ser-74 and Ser-76. Tyr-83 is modified (phosphotyrosine). EF-hand domains lie at Lys-92–Pro-127 and Gln-128–Gly-163. Ca(2+)-binding residues include Asp-105, Asp-109, Glu-116, Asp-141, Asp-143, Asp-145, Lys-147, and Glu-152. Lys-233 carries the N6-acetyllysine modification.

Interacts with CASP9; with inactive form. In terms of tissue distribution, found in lymphocytes; preferentially expressed in CD8+ cells.

It localises to the membrane raft. Functionally, may regulate B-cell receptor (BCR)-induced immature and primary B-cell apoptosis. Plays a role as negative regulator of the canonical NF-kappa-B-activating branch. Controls spontaneous apoptosis through the regulation of BCL2L1 abundance. This Homo sapiens (Human) protein is EF-hand domain-containing protein D2 (EFHD2).